An 866-amino-acid chain; its full sequence is Primer-independent DNA polymerase PolB (866 aa).

Residues 50-286 (SDLTLHIGFD…DRVPATIGAM (237 aa)) form an exonuclease domain region. The tract at residues 287-385 (AVSRFTKTLK…GLLDILTPDY (99 aa)) is palm1 domain. Residues 386–481 (GNIRLSKNPD…NSESTSVFLP (96 aa)) are TPR1 domain. The tract at residues 482 to 522 (FVQQVRENRNRHIKGSLEEKFWKEIGNSLYGKLAQGLRAKT) is fingers domain. A TPR2 domain region spans residues 523-549 (AFDTARGLNRSLPPSSVTQPFFAAHVT). A palm2 domain region spans residues 550-678 (GFIRAVVGEL…PGQTLSRSTL (129 aa)). Positions 679-866 (ISTREMWLSE…RKYPTFCLPV (188 aa)) are thumb domain.

The cofactor is Mn(2+).

The enzyme catalyses DNA(n) + a 2'-deoxyribonucleoside 5'-triphosphate = DNA(n+1) + diphosphate. Functionally, DNA polymerase with primer-independent templated DNA polymerization activity, primer-dependent DNA polymerization activity with strand displacement, translesion synthesis activity across non-bulky base damage, 3'-5' exodeoxyribonuclease activity, and de novo primer synthesis activity. The enzyme is processive and faithful. Translation synthesis across abasic sites is coupled to de novo primer synthesis. Overexpression of wild-type protein increases survival of cells upon mitomycin C or UV treatment. The protein is Primer-independent DNA polymerase PolB (pi-polB) of Escherichia coli.